The chain runs to 389 residues: Flavin-dependent monooxygenase (389 aa).

FAD contacts are provided by residues 12–15, 34–35, Q44, R105, Y267, and D289; these read AGVA and EK.

Belongs to the aromatic-ring hydroxylase family. FAD serves as cofactor.

The enzyme catalyses a tetracycline + NADPH + O2 + H(+) = a (1S,10aS)-3-(CONH2)-1-(Me2N)-3,3a,4,6-(HO)4-2,5-dioxo-1H,10aH,11H,11aH-cyclopenta[b]anthracene + CO + NADP(+) + H2O. The catalysed reaction is 7-chlorotetracycline + NADPH + O2 + H(+) = (1S,10S,10aS)-3-(CONH2)-9-Cl-1-(Me2N)-3,3a,4,10-(HO)4-10-Me-2,5-dioxo-1H,10aH,11H,11aH-cyclopenta[b]anthracen-6-olate + CO + NADP(+) + H2O. Inhibited by anhydrotetracycline. Its function is as follows. An FAD-requiring monooxygenase active on tetracycline antibiotic and some of its derivatives, which leads to their inactivation. Expression in E.coli confers high resistance to tetracycline and oxytetracycline, does not confer resistance to minocycline or tigecycline. The reaction requires NADPH. Expression in L.pneumophila confers resistance to tetracycline. Degrades and confers resistance to tetracycline and chlortetracycline. The sequence is that of Flavin-dependent monooxygenase (tet(56)) from Legionella longbeachae serogroup 1 (strain NSW150).